The sequence spans 320 residues: R2-like ligand binding oxidase (320 aa).

Mn(2+) contacts are provided by glutamate 68, glutamate 101, and histidine 104. Positions 71 to 162 form a cross-link, 3-(O4'-tyrosyl)-valine (Val-Tyr); sequence VTKDIQPFMS…AAQVRASVVY (92 aa). Glutamate 101 is a binding site for Fe cation. Fe cation-binding residues include glutamate 167, glutamate 202, and histidine 205.

The protein belongs to the ribonucleoside diphosphate reductase small chain family. R2-like ligand binding oxidase subfamily. As to quaternary structure, homodimer. It depends on Fe cation as a cofactor. The cofactor is Mn(2+).

In terms of biological role, probable oxidase that might be involved in lipid metabolism. The protein is R2-like ligand binding oxidase (nrdB) of Mycolicibacterium smegmatis (strain ATCC 700084 / mc(2)155) (Mycobacterium smegmatis).